A 137-amino-acid polypeptide reads, in one-letter code: uncharacterized protein (137 aa).

5 helical membrane passes run 4–26, 35–57, 62–84, 89–111, and 116–135; these read AIIL…KIVC, IVVN…NIII, ILTY…YYAL, ASIV…ILFL, and TLPQ…LLSI. The 123-residue stretch at 13-135 folds into the EamA domain; sequence VFYGVGTFFA…IIIGIILLSI (123 aa).

Its subcellular location is the cell membrane. This is an uncharacterized protein from Methanocaldococcus jannaschii (strain ATCC 43067 / DSM 2661 / JAL-1 / JCM 10045 / NBRC 100440) (Methanococcus jannaschii).